Reading from the N-terminus, the 197-residue chain is Nucleoside triphosphate pyrophosphatase (197 aa).

Aspartate 71 functions as the Proton acceptor in the catalytic mechanism.

The protein belongs to the Maf family. A divalent metal cation is required as a cofactor.

The protein localises to the cytoplasm. It carries out the reaction a ribonucleoside 5'-triphosphate + H2O = a ribonucleoside 5'-phosphate + diphosphate + H(+). It catalyses the reaction a 2'-deoxyribonucleoside 5'-triphosphate + H2O = a 2'-deoxyribonucleoside 5'-phosphate + diphosphate + H(+). Nucleoside triphosphate pyrophosphatase. May have a dual role in cell division arrest and in preventing the incorporation of modified nucleotides into cellular nucleic acids. The sequence is that of Nucleoside triphosphate pyrophosphatase from Trichormus variabilis (strain ATCC 29413 / PCC 7937) (Anabaena variabilis).